A 628-amino-acid chain; its full sequence is tRNA uridine 5-carboxymethylaminomethyl modification enzyme MnmG (628 aa).

An FAD-binding site is contributed by 13 to 18 (GAGHAG). 273–287 (GPRYCPSIEDKIVRF) contributes to the NAD(+) binding site.

It belongs to the MnmG family. In terms of assembly, homodimer. Heterotetramer of two MnmE and two MnmG subunits. It depends on FAD as a cofactor.

Its subcellular location is the cytoplasm. Its function is as follows. NAD-binding protein involved in the addition of a carboxymethylaminomethyl (cmnm) group at the wobble position (U34) of certain tRNAs, forming tRNA-cmnm(5)s(2)U34. The polypeptide is tRNA uridine 5-carboxymethylaminomethyl modification enzyme MnmG (Buchnera aphidicola subsp. Acyrthosiphon pisum (strain 5A)).